Reading from the N-terminus, the 273-residue chain is Phosphatidylglycerol--prolipoprotein diacylglyceryl transferase (273 aa).

Helical transmembrane passes span 20–40 (LAVR…LPIA), 59–79 (FLFY…VLFY), and 97–117 (GGMS…YFSW). Residue Arg142 coordinates a 1,2-diacyl-sn-glycero-3-phospho-(1'-sn-glycerol). 2 helical membrane passes run 206–226 (FGFL…FCEF) and 243–263 (MGQL…VYAM).

This sequence belongs to the Lgt family.

The protein localises to the cell inner membrane. It carries out the reaction L-cysteinyl-[prolipoprotein] + a 1,2-diacyl-sn-glycero-3-phospho-(1'-sn-glycerol) = an S-1,2-diacyl-sn-glyceryl-L-cysteinyl-[prolipoprotein] + sn-glycerol 1-phosphate + H(+). Its pathway is protein modification; lipoprotein biosynthesis (diacylglyceryl transfer). Its function is as follows. Catalyzes the transfer of the diacylglyceryl group from phosphatidylglycerol to the sulfhydryl group of the N-terminal cysteine of a prolipoprotein, the first step in the formation of mature lipoproteins. This Gluconobacter oxydans (strain 621H) (Gluconobacter suboxydans) protein is Phosphatidylglycerol--prolipoprotein diacylglyceryl transferase.